The sequence spans 202 residues: ATP-dependent Clp protease proteolytic subunit (202 aa).

Ser101 (nucleophile) is an active-site residue. His126 is a catalytic residue.

Belongs to the peptidase S14 family. Component of the chloroplastic Clp protease core complex.

It localises to the plastid. Its subcellular location is the chloroplast stroma. The catalysed reaction is Hydrolysis of proteins to small peptides in the presence of ATP and magnesium. alpha-casein is the usual test substrate. In the absence of ATP, only oligopeptides shorter than five residues are hydrolyzed (such as succinyl-Leu-Tyr-|-NHMec, and Leu-Tyr-Leu-|-Tyr-Trp, in which cleavage of the -Tyr-|-Leu- and -Tyr-|-Trp bonds also occurs).. In terms of biological role, cleaves peptides in various proteins in a process that requires ATP hydrolysis. Has a chymotrypsin-like activity. Plays a major role in the degradation of misfolded proteins. The polypeptide is ATP-dependent Clp protease proteolytic subunit (Calycanthus floridus var. glaucus (Eastern sweetshrub)).